Reading from the N-terminus, the 522-residue chain is 2-isopropylmalate synthase (522 aa).

The region spanning V5–H267 is the Pyruvate carboxyltransferase domain. 4 residues coordinate Mn(2+): D14, H202, H204, and N238. Positions Q392–V522 are regulatory domain.

Belongs to the alpha-IPM synthase/homocitrate synthase family. LeuA type 1 subfamily. As to quaternary structure, homodimer. Mn(2+) is required as a cofactor.

Its subcellular location is the cytoplasm. The enzyme catalyses 3-methyl-2-oxobutanoate + acetyl-CoA + H2O = (2S)-2-isopropylmalate + CoA + H(+). Its pathway is amino-acid biosynthesis; L-leucine biosynthesis; L-leucine from 3-methyl-2-oxobutanoate: step 1/4. Functionally, catalyzes the condensation of the acetyl group of acetyl-CoA with 3-methyl-2-oxobutanoate (2-ketoisovalerate) to form 3-carboxy-3-hydroxy-4-methylpentanoate (2-isopropylmalate). The polypeptide is 2-isopropylmalate synthase (Shewanella putrefaciens (strain CN-32 / ATCC BAA-453)).